A 765-amino-acid chain; its full sequence is Spastin (765 aa).

A disordered region spans residues methionine 1–threonine 94. At methionine 1–proline 107 the chain is on the cytoplasmic side. The interval methionine 1 to asparagine 195 is required for localization to punctate cytoplasmic foci. Residues serine 8–serine 19 are compositionally biased toward low complexity. Residues serine 48–alanine 58 are compositionally biased toward polar residues. Over residues threonine 59 to serine 72 the composition is skewed to low complexity. The helical intramembrane region spans isoleucine 108–tyrosine 128. Residues leucine 129–isoleucine 765 are Cytoplasmic-facing. The segment at alanine 193–isoleucine 765 is sufficient for interaction with microtubules and microtubule severing. The 76-residue stretch at histidine 218–leucine 293 folds into the MIT domain. Residues glutamine 329–methionine 462 form a disordered region. A compositionally biased stretch (low complexity) spans serine 355–serine 364. Composition is skewed to polar residues over residues asparagine 389–valine 407 and glutamine 428–isoleucine 444. Residues asparagine 446–methionine 462 form a required for interaction with microtubules region. Residue glycine 530 to threonine 537 participates in ATP binding.

The protein belongs to the AAA ATPase family. Spastin subfamily. As to quaternary structure, homohexamer. The homohexamer is stabilized by ATP-binding. The homohexamer may adopt a ring conformation through which microtubules pass prior to being severed. Interacts with microtubules. Interacts with atl; may be involved in microtubule dynamics.

The protein localises to the membrane. Its subcellular location is the cytoplasm. The protein resides in the cytoskeleton. It is found in the microtubule organizing center. It localises to the centrosome. The protein localises to the chromosome. Its subcellular location is the lipid droplet. The enzyme catalyses n ATP + n H2O + a microtubule = n ADP + n phosphate + (n+1) alpha/beta tubulin heterodimers.. ATP-dependent microtubule severing protein. Stimulates microtubule minus-end depolymerization and poleward microtubule flux in the mitotic spindle. Regulates microtubule stability in the neuromuscular junction synapse. Involved in lipid metabolism by regulating the size and distribution of lipid droplets. Involved in axon regeneration by regulating microtubule severing. This is Spastin from Drosophila mojavensis (Fruit fly).